A 495-amino-acid chain; its full sequence is 4-aminobutyrate aminotransferase (495 aa).

160–161 (GS) serves as a coordination point for pyridoxal 5'-phosphate. Arg-216 lines the substrate pocket. Lys-350 is subject to N6-(pyridoxal phosphate)lysine. Thr-374 serves as a coordination point for pyridoxal 5'-phosphate.

It belongs to the class-III pyridoxal-phosphate-dependent aminotransferase family. Homodimer. It depends on pyridoxal 5'-phosphate as a cofactor.

It carries out the reaction 4-aminobutanoate + 2-oxoglutarate = succinate semialdehyde + L-glutamate. This Dictyostelium discoideum (Social amoeba) protein is 4-aminobutyrate aminotransferase (gabT).